The sequence spans 525 residues: Cytochrome P450 4V2 (525 aa).

The helical transmembrane segment at 14–34 (LLWGAASAVSLAGATILISIF) threads the bilayer. E329 and C467 together coordinate heme.

Belongs to the cytochrome P450 family. Requires heme as cofactor.

Its subcellular location is the endoplasmic reticulum membrane. The enzyme catalyses dodecanoate + reduced [NADPH--hemoprotein reductase] + O2 = 12-hydroxydodecanoate + oxidized [NADPH--hemoprotein reductase] + H2O + H(+). It catalyses the reaction tetradecanoate + reduced [NADPH--hemoprotein reductase] + O2 = 14-hydroxytetradecanoate + oxidized [NADPH--hemoprotein reductase] + H2O + H(+). The catalysed reaction is hexadecanoate + reduced [NADPH--hemoprotein reductase] + O2 = 16-hydroxyhexadecanoate + oxidized [NADPH--hemoprotein reductase] + H2O + H(+). It carries out the reaction (5Z,8Z,11Z,14Z,17Z)-eicosapentaenoate + reduced [NADPH--hemoprotein reductase] + O2 = 20-hydroxy-(5Z,8Z,11Z,14Z,17Z)-eicosapentaenoate + oxidized [NADPH--hemoprotein reductase] + H2O + H(+). The enzyme catalyses (4Z,7Z,10Z,13Z,16Z,19Z)-docosahexaenoate + reduced [NADPH--hemoprotein reductase] + O2 = 22-hydroxy-(4Z,7Z,10Z,13Z,16Z,19Z)-docosahexaenoate + oxidized [NADPH--hemoprotein reductase] + H2O + H(+). The protein operates within lipid metabolism; fatty acid metabolism. With respect to regulation, inhibited by N-hydroxy-N'-(4-n-butyl-2-methylphenyl formamidine)(HET0016) with an IC(50) of 38 nM. Its function is as follows. A cytochrome P450 monooxygenase involved in fatty acid metabolism in the eye. Catalyzes the omega-hydroxylation of polyunsaturated fatty acids (PUFAs) docosahexaenoate (DHA) and its precursor eicosapentaenoate (EPA), and may contribute to the homeostasis of these retinal PUFAs. Omega hydroxylates saturated fatty acids such as laurate, myristate and palmitate, the catalytic efficiency decreasing in the following order: myristate &gt; laurate &gt; palmitate (C14&gt;C12&gt;C16). Mechanistically, uses molecular oxygen inserting one oxygen atom into a substrate, and reducing the second into a water molecule, with two electrons provided by NADPH via cytochrome P450 reductase (CPR; NADPH-ferrihemoprotein reductase). The protein is Cytochrome P450 4V2 (Cyp4v2) of Mus musculus (Mouse).